A 668-amino-acid chain; its full sequence is DNA ligase (668 aa).

Residues 37 to 41, 86 to 87, and Glu-116 each bind NAD(+); these read DNVYD and SM. The N6-AMP-lysine intermediate role is filled by Lys-118. Residues Arg-139, Glu-173, Lys-288, and Lys-312 each contribute to the NAD(+) site. Residues Cys-406, Cys-409, Cys-424, and Cys-429 each contribute to the Zn(2+) site. Residues 591-668 form the BRCT domain; it reads APDNPFKDKT…TEEEAIAQIE (78 aa).

Belongs to the NAD-dependent DNA ligase family. LigA subfamily. Mg(2+) serves as cofactor. It depends on Mn(2+) as a cofactor.

The enzyme catalyses NAD(+) + (deoxyribonucleotide)n-3'-hydroxyl + 5'-phospho-(deoxyribonucleotide)m = (deoxyribonucleotide)n+m + AMP + beta-nicotinamide D-nucleotide.. In terms of biological role, DNA ligase that catalyzes the formation of phosphodiester linkages between 5'-phosphoryl and 3'-hydroxyl groups in double-stranded DNA using NAD as a coenzyme and as the energy source for the reaction. It is essential for DNA replication and repair of damaged DNA. The protein is DNA ligase of Lactobacillus helveticus (strain DPC 4571).